A 122-amino-acid polypeptide reads, in one-letter code: Large ribosomal subunit protein uL14 (122 aa).

The protein belongs to the universal ribosomal protein uL14 family. As to quaternary structure, part of the 50S ribosomal subunit. Forms a cluster with proteins L3 and L19. In the 70S ribosome, L14 and L19 interact and together make contacts with the 16S rRNA in bridges B5 and B8.

Functionally, binds to 23S rRNA. Forms part of two intersubunit bridges in the 70S ribosome. The chain is Large ribosomal subunit protein uL14 from Thermoanaerobacter pseudethanolicus (strain ATCC 33223 / 39E) (Clostridium thermohydrosulfuricum).